Here is a 256-residue protein sequence, read N- to C-terminus: Probable S-methyl-5'-thioinosine phosphorylase (256 aa).

Residues Thr10 and 47–48 (RH) each bind phosphate. Met178 contributes to the substrate binding site. Thr179 contacts phosphate. 202 to 204 (NYA) serves as a coordination point for substrate.

This sequence belongs to the PNP/MTAP phosphorylase family. MTAP subfamily. As to quaternary structure, homotrimer.

The catalysed reaction is S-methyl-5'-thioinosine + phosphate = 5-(methylsulfanyl)-alpha-D-ribose 1-phosphate + hypoxanthine. Its pathway is purine metabolism; purine nucleoside salvage. Its function is as follows. Catalyzes the reversible phosphorylation of S-methyl-5'-thioinosine (MTI) to hypoxanthine and 5-methylthioribose-1-phosphate. Involved in the breakdown of S-methyl-5'-thioadenosine (MTA), a major by-product of polyamine biosynthesis. Catabolism of (MTA) occurs via deamination to MTI and phosphorolysis to hypoxanthine. This is Probable S-methyl-5'-thioinosine phosphorylase from Methanopyrus kandleri (strain AV19 / DSM 6324 / JCM 9639 / NBRC 100938).